The sequence spans 439 residues: Vacuolar protein sorting-associated protein 4 (439 aa).

Residues 8–75 (LSKGIDLVQK…TRAEQLKDHL (68 aa)) form the MIT domain. A disordered region spans residues 76–113 (EKQAQNKSTAESSVNGSTKAKKSNGDGNGSGDDNDDAD). Positions 80–93 (QNKSTAESSVNGST) are enriched in polar residues. ATP is bound at residue 175–182 (GPPGTGKS).

Belongs to the AAA ATPase family. As to quaternary structure, monomer or homodimer (in nucleotide-free form). Decamer, dodecamer or tetradecamer of two stacked respective homooligomeric rings (when bound to ATP); the dodecameric form seems to be predominant.

It localises to the endosome membrane. Functionally, pre-vacuolar protein sorting protein involved in the transport of biosynthetic membrane proteins from the prevacuolar/endosomal compartment to the vacuole. Required for multivesicular body (MVB) protein sorting. Catalyzes the ATP-dependent dissociation of class E VPS proteins from endosomal membranes, such as the disassembly of the ESCRT-III complex. Required for extracellular secretion of the secreted aspartyl proteases SAP2, SAP4, SAP5, and SAP6. Its regulation of the pre-vacuolar secretory pathway is critical for virulence. The sequence is that of Vacuolar protein sorting-associated protein 4 from Candida albicans (strain SC5314 / ATCC MYA-2876) (Yeast).